A 395-amino-acid chain; its full sequence is S-adenosylmethionine synthase (395 aa).

An ATP-binding site is contributed by H12. Position 14 (D14) interacts with Mg(2+). E40 contributes to the K(+) binding site. The L-methionine site is built by E53 and Q96. The segment at 96–106 (QSKEIADAVNF) is flexible loop. ATP is bound by residues 174 to 176 (DGK), 242 to 243 (RF), D251, 257 to 258 (RK), A274, and K278. L-methionine is bound at residue D251. Position 282 (K282) interacts with L-methionine.

The protein belongs to the AdoMet synthase family. In terms of assembly, homotetramer; dimer of dimers. The cofactor is Mg(2+). K(+) is required as a cofactor.

The protein resides in the cytoplasm. The enzyme catalyses L-methionine + ATP + H2O = S-adenosyl-L-methionine + phosphate + diphosphate. The protein operates within amino-acid biosynthesis; S-adenosyl-L-methionine biosynthesis; S-adenosyl-L-methionine from L-methionine: step 1/1. Catalyzes the formation of S-adenosylmethionine (AdoMet) from methionine and ATP. The overall synthetic reaction is composed of two sequential steps, AdoMet formation and the subsequent tripolyphosphate hydrolysis which occurs prior to release of AdoMet from the enzyme. This is S-adenosylmethionine synthase from Tropheryma whipplei (strain Twist) (Whipple's bacillus).